Here is a 520-residue protein sequence, read N- to C-terminus: 2-isopropylmalate synthase (520 aa).

Positions 5–267 constitute a Pyruvate carboxyltransferase domain; sequence VIIFDTTLRD…YTNINHQEIY (263 aa). The Mn(2+) site is built by Asp-14, His-202, His-204, and Asn-238. The regulatory domain stretch occupies residues 392-520; sequence HLDNFNIQSG…RIQQNTKEMV (129 aa).

It belongs to the alpha-IPM synthase/homocitrate synthase family. LeuA type 1 subfamily. Homodimer. The cofactor is Mn(2+).

Its subcellular location is the cytoplasm. The catalysed reaction is 3-methyl-2-oxobutanoate + acetyl-CoA + H2O = (2S)-2-isopropylmalate + CoA + H(+). It functions in the pathway amino-acid biosynthesis; L-leucine biosynthesis; L-leucine from 3-methyl-2-oxobutanoate: step 1/4. Catalyzes the condensation of the acetyl group of acetyl-CoA with 3-methyl-2-oxobutanoate (2-ketoisovalerate) to form 3-carboxy-3-hydroxy-4-methylpentanoate (2-isopropylmalate). The protein is 2-isopropylmalate synthase of Photorhabdus laumondii subsp. laumondii (strain DSM 15139 / CIP 105565 / TT01) (Photorhabdus luminescens subsp. laumondii).